The following is a 941-amino-acid chain: Translation initiation factor IF-2 (941 aa).

2 disordered regions span residues 61 to 204 and 249 to 274; these read IQSN…RREN and QEKDKETKKAKKSNKPKAIPAAKNNK. The span at 147–163 shows a compositional bias: basic and acidic residues; that stretch reads EKAKQKLQEIQKSREAL. Over residues 164-179 the composition is skewed to low complexity; that stretch reads NKLTQSNTNNANNANS. Basic and acidic residues predominate over residues 180-204; sequence AKKEISEVAKQEREQEHLDNKRREN. Positions 440–609 constitute a tr-type G domain; that stretch reads ERPPVVTIMG…LIQADIMELK (170 aa). Residues 449–456 are G1; the sequence is GHVDHGKT. 449 to 456 contacts GTP; the sequence is GHVDHGKT. The G2 stretch occupies residues 474 to 478; the sequence is GITQH. Residues 495 to 498 are G3; sequence DTPG. GTP contacts are provided by residues 495 to 499 and 549 to 552; these read DTPGH and NKMD. Residues 549-552 are G4; sequence NKMD. Positions 585–587 are G5; the sequence is SAK.

This sequence belongs to the TRAFAC class translation factor GTPase superfamily. Classic translation factor GTPase family. IF-2 subfamily.

It is found in the cytoplasm. One of the essential components for the initiation of protein synthesis. Protects formylmethionyl-tRNA from spontaneous hydrolysis and promotes its binding to the 30S ribosomal subunits. Also involved in the hydrolysis of GTP during the formation of the 70S ribosomal complex. The polypeptide is Translation initiation factor IF-2 (Helicobacter acinonychis (strain Sheeba)).